The following is a 549-amino-acid chain: FERM domain-containing protein 1 (549 aa).

Positions 1–40 are disordered; that stretch reads MAVPPRGRGIDPARTNPDTFPPSGARCMEPSPERPACSQQ. The FERM domain maps to 54 to 369; the sequence is RDVLVLLPSR…DELELDLASR (316 aa). Disordered regions lie at residues 377 to 400 and 422 to 464; these read SSQH…YTSG and HGLH…GQSA. Residues 430 to 443 are compositionally biased toward low complexity; it reads SSSPRTSRSHPSTR. Residues 444–462 show a composition bias toward polar residues; that stretch reads GDSQATRQEPCTQVRTRGQ.

In Homo sapiens (Human), this protein is FERM domain-containing protein 1 (FRMD1).